Here is a 213-residue protein sequence, read N- to C-terminus: Peptidyl-tRNA hydrolase (213 aa).

Tyr15 provides a ligand contact to tRNA. His20 acts as the Proton acceptor in catalysis. Phe66, Asn68, and Asn114 together coordinate tRNA. Residues His187–Gln213 form a disordered region. A compositionally biased stretch (low complexity) spans Ala201 to Gln213.

The protein belongs to the PTH family. Monomer.

It is found in the cytoplasm. It catalyses the reaction an N-acyl-L-alpha-aminoacyl-tRNA + H2O = an N-acyl-L-amino acid + a tRNA + H(+). Functionally, hydrolyzes ribosome-free peptidyl-tRNAs (with 1 or more amino acids incorporated), which drop off the ribosome during protein synthesis, or as a result of ribosome stalling. Its function is as follows. Catalyzes the release of premature peptidyl moieties from peptidyl-tRNA molecules trapped in stalled 50S ribosomal subunits, and thus maintains levels of free tRNAs and 50S ribosomes. In Paracidovorax citrulli (strain AAC00-1) (Acidovorax citrulli), this protein is Peptidyl-tRNA hydrolase.